The primary structure comprises 349 residues: Hydroxymethylglutaryl-CoA synthase (349 aa).

Residue Asp-29 coordinates (3S)-3-hydroxy-3-methylglutaryl-CoA. Glu-81 serves as the catalytic Proton donor/acceptor. Cys-113, Ser-154, Thr-202, and His-235 together coordinate (3S)-3-hydroxy-3-methylglutaryl-CoA. Cys-113 (acyl-thioester intermediate) is an active-site residue. His-235 functions as the Proton donor/acceptor in the catalytic mechanism. Arg-240 contacts CoA. Residues Arg-244, Asn-267, and Ser-297 each coordinate (3S)-3-hydroxy-3-methylglutaryl-CoA.

It belongs to the thiolase-like superfamily. Archaeal HMG-CoA synthase family. In terms of assembly, interacts with acetoacetyl-CoA thiolase that catalyzes the precedent step in the pathway and with a DUF35 protein. The acetoacetyl-CoA thiolase/HMG-CoA synthase complex channels the intermediate via a fused CoA-binding site, which allows for efficient coupling of the endergonic thiolase reaction with the exergonic HMGCS reaction.

The catalysed reaction is acetoacetyl-CoA + acetyl-CoA + H2O = (3S)-3-hydroxy-3-methylglutaryl-CoA + CoA + H(+). Its pathway is metabolic intermediate biosynthesis; (R)-mevalonate biosynthesis; (R)-mevalonate from acetyl-CoA: step 2/3. Functionally, catalyzes the condensation of acetyl-CoA with acetoacetyl-CoA to form 3-hydroxy-3-methylglutaryl-CoA (HMG-CoA). Functions in the mevalonate (MVA) pathway leading to isopentenyl diphosphate (IPP), a key precursor for the biosynthesis of isoprenoid compounds that are building blocks of archaeal membrane lipids. The protein is Hydroxymethylglutaryl-CoA synthase of Pyrobaculum arsenaticum (strain DSM 13514 / JCM 11321 / PZ6).